The chain runs to 173 residues: Crossover junction endodeoxyribonuclease RuvC (173 aa).

Catalysis depends on residues D8, E68, and D140. D8, E68, and D140 together coordinate Mg(2+).

It belongs to the RuvC family. In terms of assembly, homodimer which binds Holliday junction (HJ) DNA. The HJ becomes 2-fold symmetrical on binding to RuvC with unstacked arms; it has a different conformation from HJ DNA in complex with RuvA. In the full resolvosome a probable DNA-RuvA(4)-RuvB(12)-RuvC(2) complex forms which resolves the HJ. Requires Mg(2+) as cofactor.

Its subcellular location is the cytoplasm. It carries out the reaction Endonucleolytic cleavage at a junction such as a reciprocal single-stranded crossover between two homologous DNA duplexes (Holliday junction).. The RuvA-RuvB-RuvC complex processes Holliday junction (HJ) DNA during genetic recombination and DNA repair. Endonuclease that resolves HJ intermediates. Cleaves cruciform DNA by making single-stranded nicks across the HJ at symmetrical positions within the homologous arms, yielding a 5'-phosphate and a 3'-hydroxyl group; requires a central core of homology in the junction. The consensus cleavage sequence is 5'-(A/T)TT(C/G)-3'. Cleavage occurs on the 3'-side of the TT dinucleotide at the point of strand exchange. HJ branch migration catalyzed by RuvA-RuvB allows RuvC to scan DNA until it finds its consensus sequence, where it cleaves and resolves the cruciform DNA. This chain is Crossover junction endodeoxyribonuclease RuvC, found in Saccharophagus degradans (strain 2-40 / ATCC 43961 / DSM 17024).